A 138-amino-acid chain; its full sequence is MSGTFLGFDFGTKSIGVAVGQRITATARPLPALKAQDGKPDWNVIEKLLKEWQPEAVIVGLPLNMDGTEQPLTARARNFANKIHGRFGVAILLHDERLSTVEARAGLFEHGGYRALNKGSVDSASAVVILESYFEQSF.

This sequence belongs to the YqgF nuclease family.

Its subcellular location is the cytoplasm. Functionally, could be a nuclease involved in processing of the 5'-end of pre-16S rRNA. In Klebsiella pneumoniae subsp. pneumoniae (strain ATCC 700721 / MGH 78578), this protein is Putative pre-16S rRNA nuclease.